The following is a 569-amino-acid chain: Ribosome-inactivating protein SNAI' (569 aa).

The first 28 residues, 1–28, serve as a signal peptide directing secretion; it reads MKVVATILYLVVLAICGLGIHGAHPTHS. N-linked (GlcNAc...) asparagine glycosylation occurs at Asn-40. Residue Glu-201 is part of the active site. 3 cysteine pairs are disulfide-bonded: Cys-286–Cys-311, Cys-328–Cys-347, and Cys-369–Cys-381. 2 Ricin B-type lectin domains span residues 315–435 and 437–565; these read EEVT…WIVG and VEPL…WIAS. A 1-alpha repeat occupies 325–365; that stretch reads DGFCAEVKNGDEKDGTPVQLSSCGEQSNQQWTFSTDGTIQS. One copy of the 1-beta repeat lies at 366–401; the sequence is LGKCLTTSSSVMIYNCKVVPPESTKWVVSIDGTITN. A 1-gamma repeat occupies 404 to 436; that stretch reads SGLVLTAPKAAEGTLVSLEKNVHAARQGWIVGN. The 2-alpha repeat unit spans residues 448 to 488; that stretch reads EQMCLETNPGNNDVSLGDCSVKSASKVDQKWALYGDGTIRV. Intrachain disulfides connect Cys-451–Cys-466 and Cys-495–Cys-512. A 2-beta repeat occupies 492–530; that stretch reads RSLCVTSEGKSSNEPIIILKCLGWANQRWVFNTDGTISN. The 2-gamma repeat unit spans residues 533-566; it reads SKLVMHVDQNDVPLRKIILSHPSGTSNQQWIAST.

This sequence in the N-terminal section; belongs to the ribosome-inactivating protein family. Type 2 RIP subfamily. Disulfide-linked dimer of A and B chains.

The catalysed reaction is Endohydrolysis of the N-glycosidic bond at one specific adenosine on the 28S rRNA.. In terms of biological role, the A chain is responsible for inhibiting protein synthesis through the catalytic inactivation of 60S ribosomal subunits by removing adenine from position 4,324 of 28S rRNA. The B chain binds to cell receptors and probably facilitates the entry into the cell of the A chain; B chains are also responsible for cell agglutination (lectin activity). Agglutination is inhibited by Neu5Ac(alpha2,6)lactose, and N-linked glycoproteins such as fetuin and orosomucoid. This chain is Ribosome-inactivating protein SNAI', found in Sambucus nigra (European elder).